We begin with the raw amino-acid sequence, 278 residues long: Probable 3-hydroxybutyryl-CoA dehydrogenase (278 aa).

It belongs to the 3-hydroxyacyl-CoA dehydrogenase family.

It catalyses the reaction (3S)-3-hydroxybutanoyl-CoA + NADP(+) = acetoacetyl-CoA + NADPH + H(+). Its pathway is lipid metabolism; butanoate metabolism. The polypeptide is Probable 3-hydroxybutyryl-CoA dehydrogenase (hbd) (Deinococcus radiodurans (strain ATCC 13939 / DSM 20539 / JCM 16871 / CCUG 27074 / LMG 4051 / NBRC 15346 / NCIMB 9279 / VKM B-1422 / R1)).